The sequence spans 640 residues: tRNA uridine 5-carboxymethylaminomethyl modification enzyme MnmG (640 aa).

9–14 contributes to the FAD binding site; the sequence is GGGHAG. 289-303 lines the NAD(+) pocket; sequence GPRYCPSIEDKINKF.

It belongs to the MnmG family. In terms of assembly, homodimer. Heterotetramer of two MnmE and two MnmG subunits. FAD is required as a cofactor.

Its subcellular location is the cytoplasm. Its function is as follows. NAD-binding protein involved in the addition of a carboxymethylaminomethyl (cmnm) group at the wobble position (U34) of certain tRNAs, forming tRNA-cmnm(5)s(2)U34. This Campylobacter hominis (strain ATCC BAA-381 / DSM 21671 / CCUG 45161 / LMG 19568 / NCTC 13146 / CH001A) protein is tRNA uridine 5-carboxymethylaminomethyl modification enzyme MnmG.